A 725-amino-acid polypeptide reads, in one-letter code: Putative coiled-coil domain-containing protein 144B (725 aa).

The segment covering 1–11 has biased composition (basic and acidic residues); the sequence is MASWGGEKRGG. Disordered stretches follow at residues 1–25, 87–188, 213–260, 453–485, and 528–586; these read MASWGGEKRGGAEGSPKLAVYATRK, AARS…NLTE, LPEN…DCDR, NMNQNSDSGSTNNYKSLKPKLENLSSLPPDSDR, and EEEM…KVKN. 2 stretches are compositionally biased toward polar residues: residues 129–150 and 165–178; these read PESLPQNNNPDWHPTNLTLSDE and PSVSPSMPENQSAT. A coiled-coil region spans residues 215-244; it reads ENKESKEAEQDLELTSEEEQERLKGCENKQ. Positions 224–234 are enriched in acidic residues; it reads QDLELTSEEEQ. The segment covering 453–467 has biased composition (polar residues); that stretch reads NMNQNSDSGSTNNYK. Positions 490–546 form a coiled coil; sequence YLHEELQQDMQKFKNEVNTLEEEFLALKKENVQLHKEVEEEMEKHRSNSTELSGTLT. A compositionally biased stretch (basic and acidic residues) spans 528–537; it reads EEEMEKHRSN. Residues 543–552 are compositionally biased toward low complexity; the sequence is GTLTDGTTVG. Positions 563–583 are enriched in basic and acidic residues; it reads PRKENEEHDRPADKTANEKNK. Residues 648 to 713 adopt a coiled-coil conformation; sequence LLKLKNNHCD…ALKQENGRKE (66 aa).

Belongs to the CCDC144 family.

The sequence is that of Putative coiled-coil domain-containing protein 144B from Homo sapiens (Human).